The sequence spans 294 residues: Cytidine deaminase (294 aa).

CMP/dCMP-type deaminase domains follow at residues 48–168 (DEDA…FGPK) and 186–294 (LTGD…VLLA). 89 to 91 (NME) contributes to the substrate binding site. Position 102 (His-102) interacts with Zn(2+). Glu-104 functions as the Proton donor in the catalytic mechanism. Positions 129 and 132 each coordinate Zn(2+).

The protein belongs to the cytidine and deoxycytidylate deaminase family. In terms of assembly, homodimer. Zn(2+) serves as cofactor.

The enzyme catalyses cytidine + H2O + H(+) = uridine + NH4(+). It carries out the reaction 2'-deoxycytidine + H2O + H(+) = 2'-deoxyuridine + NH4(+). Its function is as follows. This enzyme scavenges exogenous and endogenous cytidine and 2'-deoxycytidine for UMP synthesis. The protein is Cytidine deaminase of Escherichia coli O17:K52:H18 (strain UMN026 / ExPEC).